We begin with the raw amino-acid sequence, 981 residues long: Anoctamin-3 (981 aa).

Positions 1–22 (MVHHSGSIQSFKQQKGMNISKS) are enriched in polar residues. The segment at 1–33 (MVHHSGSIQSFKQQKGMNISKSEITKETSLKPS) is disordered. At 1-403 (MVHHSGSIQS…LYFAWLGWYT (403 aa)) the chain is on the cytoplasmic side. A helical transmembrane segment spans residues 404-424 (GMLIPAAIVGLCVFFYGLFTM). Residues asparagine 425, asparagine 448, and asparagine 455 are each glycosylated (N-linked (GlcNAc...) asparagine). Residues 425–469 (NNSQVSQEICKATEVFMCPLCDKNCSLQRLNDSCIYAKVTYLFDN) lie on the Extracellular side of the membrane. Residues 470–490 (GGTVFFAIFMAIWATVFLEFW) form a helical membrane-spanning segment. Over 491-550 (KRRRSILTYTWDLIEWEEEEETLRPQFEAKYYKMEIVNPITGKPEPHQPSSDKVTRLLVS) the chain is Cytoplasmic. Residues 551–571 (VSGIFFMISLVITAVFGVVVY) form a helical membrane-spanning segment. The Extracellular segment spans residues 572 to 592 (RLVVMEQFASFKWNFIKQYWQ). The helical transmembrane segment at 593–613 (FATSAAAVCINFIIIMLLNLA) threads the bilayer. The Cytoplasmic portion of the chain corresponds to 614 to 640 (YEKIAYLLTNLEYPRTESEWENSFALK). Residues 641 to 661 (MFLFQFVNLNSSIFYIAFFLG) form a helical membrane-spanning segment. The Extracellular portion of the chain corresponds to 662–761 (RFVGHPGKYN…MDEYLEMVLQ (100 aa)). A helical transmembrane segment spans residues 762-782 (FGFTTIFVAAFPLAPLLALLN). The Cytoplasmic portion of the chain corresponds to 783-810 (NIIEIRLDAYKFVTQWRRPLPARATDIG). Residues 811–831 (IWLGILEGIGILAVITNAFVI) form a helical membrane-spanning segment. Over 832 to 914 (AITSDYIPRF…QYWHILAARL (83 aa)) the chain is Extracellular. Asparagine 866 is a glycosylation site (N-linked (GlcNAc...) asparagine). Residues 915-935 (AFIIVFEHLVFGIKSFIAYLI) traverse the membrane as a helical segment. Residues 936–981 (PDVPKGLHDRIRREKYLVQEMMYEAELEHLQQQRRKSGQPVHHEWP) lie on the Cytoplasmic side of the membrane.

This sequence belongs to the anoctamin family. In terms of assembly, interacts with KCNT1/Slack. Highly expressed in the forebrain striatum.

The protein resides in the cell membrane. The enzyme catalyses a 1,2-diacyl-sn-glycero-3-phosphocholine(in) = a 1,2-diacyl-sn-glycero-3-phosphocholine(out). The catalysed reaction is a beta-D-galactosyl-(1&lt;-&gt;1')-N-acylsphing-4-enine(out) = a beta-D-galactosyl-(1&lt;-&gt;1')-N-acylsphing-4-enine(in). Its function is as follows. Has calcium-dependent phospholipid scramblase activity; scrambles phosphatidylcholine and galactosylceramide. Seems to act as potassium channel regulator and may inhibit pain signaling; can facilitate KCNT1/Slack channel activity by promoting its full single-channel conductance at very low sodium concentrations and by increasing its sodium sensitivity. Does not exhibit calcium-activated chloride channel (CaCC) activity. The polypeptide is Anoctamin-3 (ANO3) (Homo sapiens (Human)).